Reading from the N-terminus, the 282-residue chain is NH(3)-dependent NAD(+) synthetase (282 aa).

51–58 (GISGGVDS) is an ATP binding site. A Mg(2+)-binding site is contributed by Asp57. Arg148 lines the deamido-NAD(+) pocket. Position 168 (Thr168) interacts with ATP. Position 173 (Glu173) interacts with Mg(2+). Deamido-NAD(+) is bound by residues Lys181 and Asp188. ATP contacts are provided by Lys197 and Thr219. Position 268–269 (268–269 (HK)) interacts with deamido-NAD(+).

The protein belongs to the NAD synthetase family. In terms of assembly, homodimer.

The catalysed reaction is deamido-NAD(+) + NH4(+) + ATP = AMP + diphosphate + NAD(+) + H(+). The protein operates within cofactor biosynthesis; NAD(+) biosynthesis; NAD(+) from deamido-NAD(+) (ammonia route): step 1/1. Functionally, catalyzes the ATP-dependent amidation of deamido-NAD to form NAD. Uses ammonia as a nitrogen source. This chain is NH(3)-dependent NAD(+) synthetase, found in Burkholderia cenocepacia (strain HI2424).